A 139-amino-acid chain; its full sequence is Putative nickel-responsive regulator (139 aa).

Residues His-79, His-90, His-92, and Cys-98 each contribute to the Ni(2+) site.

Belongs to the transcriptional regulatory CopG/NikR family. It depends on Ni(2+) as a cofactor.

Functionally, transcriptional regulator. The chain is Putative nickel-responsive regulator from Anaeromyxobacter dehalogenans (strain 2CP-C).